Consider the following 940-residue polypeptide: DNA gyrase subunit A (940 aa).

Residues 1–22 (MSDHTNPPSAPPDDDPNGGSLL) are disordered. The 491-residue stretch at 48–538 (LPDARDGLKP…SLADQDDESL (491 aa)) folds into the Topo IIA-type catalytic domain. Tyr-136 acts as the O-(5'-phospho-DNA)-tyrosine intermediate in catalysis. A GyrA-box motif is present at residues 565–571 (QHRGGRG). The segment covering 914 to 924 (ESVDDNGDDAD) has biased composition (acidic residues). The disordered stretch occupies residues 914–940 (ESVDDNGDDADSVAPAAPDGQVTDSDD).

The protein belongs to the type II topoisomerase GyrA/ParC subunit family. As to quaternary structure, heterotetramer, composed of two GyrA and two GyrB chains. In the heterotetramer, GyrA contains the active site tyrosine that forms a transient covalent intermediate with DNA, while GyrB binds cofactors and catalyzes ATP hydrolysis.

It localises to the cytoplasm. The enzyme catalyses ATP-dependent breakage, passage and rejoining of double-stranded DNA.. In terms of biological role, a type II topoisomerase that negatively supercoils closed circular double-stranded (ds) DNA in an ATP-dependent manner to modulate DNA topology and maintain chromosomes in an underwound state. Negative supercoiling favors strand separation, and DNA replication, transcription, recombination and repair, all of which involve strand separation. Also able to catalyze the interconversion of other topological isomers of dsDNA rings, including catenanes and knotted rings. Type II topoisomerases break and join 2 DNA strands simultaneously in an ATP-dependent manner. The sequence is that of DNA gyrase subunit A from Granulibacter bethesdensis (strain ATCC BAA-1260 / CGDNIH1).